A 210-amino-acid polypeptide reads, in one-letter code: A-kinase-interacting protein 1 (210 aa).

Disordered regions lie at residues 58–80 (HLEK…ERPP) and 136–162 (QRKD…EASQ).

In terms of assembly, interacts with PRKACA and RELA. In terms of tissue distribution, expressed at high levels in adult heart and at lower levels in brain, testis, ovary and skeletal muscle. Up-regulated in some breast cancer cell lines. Isoform 1 and isoform 3 are expressed in fetal brain.

It localises to the nucleus. Its function is as follows. Enhances NF-kappa-B transcriptional activity by regulating the nuclear localization of the NF-kappa-B subunit RELA and promoting the phosphorylation of RELA by PRKACA. Regulates the effect of the cAMP-dependent protein kinase signaling pathway on the NF-kappa-B activation cascade. The protein is A-kinase-interacting protein 1 (AKIP1) of Homo sapiens (Human).